A 206-amino-acid chain; its full sequence is Uridine kinase (206 aa).

Residue 9–16 (GGSGSGKT) participates in ATP binding.

It belongs to the uridine kinase family.

Its subcellular location is the cytoplasm. It carries out the reaction uridine + ATP = UMP + ADP + H(+). It catalyses the reaction cytidine + ATP = CMP + ADP + H(+). The protein operates within pyrimidine metabolism; CTP biosynthesis via salvage pathway; CTP from cytidine: step 1/3. Its pathway is pyrimidine metabolism; UMP biosynthesis via salvage pathway; UMP from uridine: step 1/1. This Borrelia hermsii (strain HS1 / DAH) protein is Uridine kinase.